A 300-amino-acid polypeptide reads, in one-letter code: Bifunctional protein FolD (300 aa).

NADP(+)-binding positions include 169 to 171, S196, and I237; that span reads GRG.

This sequence belongs to the tetrahydrofolate dehydrogenase/cyclohydrolase family. As to quaternary structure, homodimer.

The catalysed reaction is (6R)-5,10-methylene-5,6,7,8-tetrahydrofolate + NADP(+) = (6R)-5,10-methenyltetrahydrofolate + NADPH. The enzyme catalyses (6R)-5,10-methenyltetrahydrofolate + H2O = (6R)-10-formyltetrahydrofolate + H(+). Its pathway is one-carbon metabolism; tetrahydrofolate interconversion. Its function is as follows. Catalyzes the oxidation of 5,10-methylenetetrahydrofolate to 5,10-methenyltetrahydrofolate and then the hydrolysis of 5,10-methenyltetrahydrofolate to 10-formyltetrahydrofolate. The chain is Bifunctional protein FolD from Clavibacter sepedonicus (Clavibacter michiganensis subsp. sepedonicus).